Reading from the N-terminus, the 62-residue chain is Potassium channel toxin alpha-KTx Tx790 (62 aa).

Residues 1–18 form the signal peptide; sequence MQKLFIVLVLFCILRLDA. 3 cysteine pairs are disulfide-bonded: cysteine 28-cysteine 46, cysteine 33-cysteine 59, and cysteine 37-cysteine 61.

It belongs to the short scorpion toxin superfamily. Potassium channel inhibitor family. Alpha-KTx 23 subfamily. In terms of tissue distribution, expressed by the venom gland.

It is found in the secreted. Functionally, may block potassium channels. This Buthus israelis (Israeli scorpion) protein is Potassium channel toxin alpha-KTx Tx790.